A 493-amino-acid polypeptide reads, in one-letter code: MSELTALTIAEARDKLKAKAITATELTDAYLSAIDAANDAINAYVAVTHDQARSMAKASDERIAKGEAGALEGIPLGVKDLFATKGVHTQACSHILDGFKPEYESTVTANLWADGAVMLGKLNMDEFAMGSSNETSYYGPVKNPWRAKGSNADLVPGGSSGGSAAAVAAHLCAGATATDTGGSIRQPAAFTGTVGIKPTYGRVSRWGTVAFASSLDQAGPIARDVRDAAILMKSMASLDLKDTTSVDLPVPDYEAALGRSVKGMKIGIPREYRVDGMPGEIEELWQKGIQYLKDAGAEIVDISLPHTKYALPAYYIVAPAEASSNLARYDGVRYGLRVPGKDIADMYEQTRAAGFGKEAKRRIMIGTYVLSAGYYDAYYLRAQKVRTLIKKDFEDVFAKGVDAILTPATPSAAFGLADEVLANDPVKMYLNDIFTVTVNMAGLPGIAVPAGLNGQGLPLGLQLIGRPFEEETLFQAAHVIEQAAGRFTPAKWW.

Catalysis depends on charge relay system residues Lys-79 and Ser-159. Catalysis depends on Ser-183, which acts as the Acyl-ester intermediate.

The protein belongs to the amidase family. GatA subfamily. In terms of assembly, heterotrimer of A, B and C subunits.

The enzyme catalyses L-glutamyl-tRNA(Gln) + L-glutamine + ATP + H2O = L-glutaminyl-tRNA(Gln) + L-glutamate + ADP + phosphate + H(+). Its function is as follows. Allows the formation of correctly charged Gln-tRNA(Gln) through the transamidation of misacylated Glu-tRNA(Gln) in organisms which lack glutaminyl-tRNA synthetase. The reaction takes place in the presence of glutamine and ATP through an activated gamma-phospho-Glu-tRNA(Gln). The polypeptide is Glutamyl-tRNA(Gln) amidotransferase subunit A (Brucella ovis (strain ATCC 25840 / 63/290 / NCTC 10512)).